A 449-amino-acid polypeptide reads, in one-letter code: Glucose-6-phosphate isomerase (449 aa).

Glu291 serves as the catalytic Proton donor. Active-site residues include His312 and Lys426.

It belongs to the GPI family.

It is found in the cytoplasm. It catalyses the reaction alpha-D-glucose 6-phosphate = beta-D-fructose 6-phosphate. The protein operates within carbohydrate biosynthesis; gluconeogenesis. It participates in carbohydrate degradation; glycolysis; D-glyceraldehyde 3-phosphate and glycerone phosphate from D-glucose: step 2/4. Its function is as follows. Catalyzes the reversible isomerization of glucose-6-phosphate to fructose-6-phosphate. The chain is Glucose-6-phosphate isomerase from Streptococcus pneumoniae serotype 4 (strain ATCC BAA-334 / TIGR4).